Here is a 449-residue protein sequence, read N- to C-terminus: Adenylosuccinate synthetase isozyme 1 B (449 aa).

Residues 34–40 and 62–64 each bind GTP; these read GDEGKGK and GHT. The active-site Proton acceptor is the Asp-35. Mg(2+)-binding residues include Asp-35 and Gly-62. Asp-35 provides a ligand contact to substrate. IMP is bound by residues 35–38, 60–63, Thr-155, Arg-169, Asn-248, Thr-263, and Arg-327; these read DEGK and NAGH. The active-site Proton donor is His-63. 323–329 is a substrate binding site; sequence VTTGRKR. GTP is bound by residues Arg-329, 355–357, and 437–440; these read KLD and GVGK.

Belongs to the adenylosuccinate synthetase family. As to quaternary structure, homodimer. Requires Mg(2+) as cofactor.

It localises to the cytoplasm. It catalyses the reaction IMP + L-aspartate + GTP = N(6)-(1,2-dicarboxyethyl)-AMP + GDP + phosphate + 2 H(+). Its pathway is purine metabolism; AMP biosynthesis via de novo pathway; AMP from IMP: step 1/2. Functionally, component of the purine nucleotide cycle (PNC), which interconverts IMP and AMP to regulate the nucleotide levels in various tissues, and which contributes to glycolysis and ammoniagenesis. Catalyzes the first committed step in the biosynthesis of AMP from IMP. The polypeptide is Adenylosuccinate synthetase isozyme 1 B (adss1b) (Salmo salar (Atlantic salmon)).